Here is a 479-residue protein sequence, read N- to C-terminus: ATP synthase subunit beta (479 aa).

An ATP-binding site is contributed by 153–160 (GGAGVGKT).

This sequence belongs to the ATPase alpha/beta chains family. In terms of assembly, F-type ATPases have 2 components, CF(1) - the catalytic core - and CF(0) - the membrane proton channel. CF(1) has five subunits: alpha(3), beta(3), gamma(1), delta(1), epsilon(1). CF(0) has three main subunits: a(1), b(2) and c(9-12). The alpha and beta chains form an alternating ring which encloses part of the gamma chain. CF(1) is attached to CF(0) by a central stalk formed by the gamma and epsilon chains, while a peripheral stalk is formed by the delta and b chains.

The protein localises to the cell membrane. It carries out the reaction ATP + H2O + 4 H(+)(in) = ADP + phosphate + 5 H(+)(out). With respect to regulation, increases 2-fold following exposure to low pH. Produces ATP from ADP in the presence of a proton gradient across the membrane. The catalytic sites are hosted primarily by the beta subunits. The polypeptide is ATP synthase subunit beta (Lactobacillus acidophilus (strain ATCC 700396 / NCK56 / N2 / NCFM)).